We begin with the raw amino-acid sequence, 205 residues long: Small ribosomal subunit protein uS4 (205 aa).

In terms of domain architecture, S4 RNA-binding spans 94-157 (SRLDTVVYRM…QQIPLIQESI (64 aa)).

Belongs to the universal ribosomal protein uS4 family. As to quaternary structure, part of the 30S ribosomal subunit. Contacts protein S5. The interaction surface between S4 and S5 is involved in control of translational fidelity.

In terms of biological role, one of the primary rRNA binding proteins, it binds directly to 16S rRNA where it nucleates assembly of the body of the 30S subunit. Its function is as follows. With S5 and S12 plays an important role in translational accuracy. This is Small ribosomal subunit protein uS4 from Rickettsia typhi (strain ATCC VR-144 / Wilmington).